Here is a 401-residue protein sequence, read N- to C-terminus: MFANINIRKSVWLFLLAAVSCTLFIYGVTRTDLQTLKNPSSLTSPSSSTSVDKKKPLFTKSPRNSASCESTITLQSNLLFTYYKHYFAGIKKVALIGFPDHPNKGDSAIYVAEKKLLDALNIEVVYITAQEADYSASELKSIISDIPRDEFALAFHGGGNFGDLYPDHQHLRELVVRDFPSFTTISFPQSVWYNEQQLLEQASILYAENPNITLVTRDRQSYGFAVDAFGKHNEVLLTPDIVFFMGPIPEIREATPITHDVLILARLDHEGGQQHGAEDYYRDTLNAANLTYSVEDWLLWDPPVAQNPDSSFDDRGQARYEAGAEFLASARVVITDRLHAHILSTLMGIPHIVVENSQMGKITNYHNTWLHGCTLDGVSVVVDSVDKALSLLLEWNEAGYF.

The first 30 residues, 1 to 30 (MFANINIRKSVWLFLLAAVSCTLFIYGVTR), serve as a signal peptide directing secretion. The disordered stretch occupies residues 38 to 64 (NPSSLTSPSSSTSVDKKKPLFTKSPRN). Residues 39 to 50 (PSSLTSPSSSTS) show a composition bias toward low complexity.

It belongs to the polysaccharide pyruvyl transferase family.

Functionally, involved in cell wall biogenesis. Has a role in the addition of Gal-beta1,3 moieties to galactomannans and their subsequent pyruvylation. The protein is Pyruvyl transferase 1 (pvg1) of Schizosaccharomyces pombe (strain 972 / ATCC 24843) (Fission yeast).